An 812-amino-acid polypeptide reads, in one-letter code: MTEKSHKKTAKGRAGSPSPTSARNKKADNGARGNKVSERLKAVKELQKTETKKARPEHVVNLIGDALWLMGLAATLYLVISLISFDMGDPSWSHSSPVVEDVANWGGLFGAYVADVGYYLFGWSFWWWIAAACVMLYKNFRLHAKQTENEAYNHKIAAAALFVLTVFSPVLEYFVLGGKYADSLPVGAGGMVGIRVGAVFAWLLGKSGSLLIILVVLLLSLSLLVQISWLEFLNGAGRAVQNRLSALSGKVMALGKRRPNTKTDGVDTQNTRRMVKEAKNITAKPVALPEGSSSNRKSVAVSVAPPPKIQVSLFEDDEPRQAGEYHKPTLNLLRIPDSEPVSINPAELERTAELIESKLAEFGIGVQVVSATSGPVITRYEIEPAQGVKGSQIVALSKDLARSMSLQSVRIVETIAGKNTMGIELPNDKRQDVMLSEILSSPVFAEAKSKLTVALGKDIAGTPVVGDLAKMPHLLVAGMTGSGKSVGVNGMIMSMLFKATPDEVRFIMIDPKMLELSIYDGIPHLLCPVVTDMREAGQALNWCVAEMEKRYRLLSHAGVRNLEGFNQKVEAAKAAGKPLLNPFSLNPDNPEPLEKLPMIVVVIDELADLMMTERKAVEQQIARLAQKARAAGIHMIVATQRPSVDVVTGLIKANIPTRMAFTVQSKIDSRTILDQMGADELLKYGDSLFLQPGSAEPTRLQGAFVSDDEVHHVVAFVKEQAPANYVEGLLTGEAAQETANIVSPNADSDELFDQAVAYVLESKKTSISSLQRQLRIGYNRAANLMEALENAGVVSPSDLNGSRKILAHKDHL.

Basic residues predominate over residues 1–11; sequence MTEKSHKKTAK. The tract at residues 1–36 is disordered; that stretch reads MTEKSHKKTAKGRAGSPSPTSARNKKADNGARGNKV. The span at 25 to 36 shows a compositional bias: basic and acidic residues; sequence KKADNGARGNKV. The next 5 membrane-spanning stretches (helical) occupy residues 63 to 83, 116 to 136, 156 to 176, 184 to 204, and 210 to 230; these read IGDA…ISLI, VGYY…CVML, IAAA…YFVL, LPVG…AWLL, and LLII…ISWL. Residues 231 to 812 are Cytoplasmic-facing; sequence EFLNGAGRAV…RKILAHKDHL (582 aa). The region spanning 461–670 is the FtsK domain; the sequence is GTPVVGDLAK…FTVQSKIDSR (210 aa). An ATP-binding site is contributed by 481 to 486; that stretch reads GSGKSV.

This sequence belongs to the FtsK/SpoIIIE/SftA family. As to quaternary structure, homohexamer. Forms a ring that surrounds DNA.

It is found in the cell inner membrane. Functionally, essential cell division protein that coordinates cell division and chromosome segregation. The N-terminus is involved in assembly of the cell-division machinery. The C-terminus functions as a DNA motor that moves dsDNA in an ATP-dependent manner towards the dif recombination site, which is located within the replication terminus region. Translocation stops specifically at Xer-dif sites, where FtsK interacts with the Xer recombinase, allowing activation of chromosome unlinking by recombination. FtsK orienting polar sequences (KOPS) guide the direction of DNA translocation. FtsK can remove proteins from DNA as it translocates, but translocation stops specifically at XerCD-dif site, thereby preventing removal of XerC and XerD from dif. The protein is DNA translocase FtsK 1 (ftsK1) of Neisseria meningitidis serogroup A / serotype 4A (strain DSM 15465 / Z2491).